The sequence spans 218 residues: Protein-lysine N-methyltransferase M142.8 (218 aa).

The protein belongs to the class I-like SAM-binding methyltransferase superfamily. EFM5 family.

It localises to the cytoplasm. Its function is as follows. S-adenosyl-L-methionine-dependent protein-lysine N-methyltransferase that methylates elongation factor 1-alpha. This Caenorhabditis elegans protein is Protein-lysine N-methyltransferase M142.8.